Reading from the N-terminus, the 556-residue chain is DNA ligase B (556 aa).

The N6-AMP-lysine intermediate role is filled by K122.

This sequence belongs to the NAD-dependent DNA ligase family. LigB subfamily.

It carries out the reaction NAD(+) + (deoxyribonucleotide)n-3'-hydroxyl + 5'-phospho-(deoxyribonucleotide)m = (deoxyribonucleotide)n+m + AMP + beta-nicotinamide D-nucleotide.. Catalyzes the formation of phosphodiester linkages between 5'-phosphoryl and 3'-hydroxyl groups in double-stranded DNA using NAD as a coenzyme and as the energy source for the reaction. In Enterobacter sp. (strain 638), this protein is DNA ligase B.